Reading from the N-terminus, the 311-residue chain is ATP synthase subunit a (311 aa).

Helical transmembrane passes span 62–82 (AVHVDTLGWGIFLALVVGFFM), 123–143 (VAPMAITVFSWVFMMNLMDLI), 179–199 (VTVFILMLFFSVQQKGLWGFI), 213–233 (FWYFNLILIPFNFILETVALI), 253–273 (IFILIATLFSVGLLFGFLGGI), and 276–296 (FGWAVLHILVILIQAFVFMVL).

It belongs to the ATPase A chain family. In terms of assembly, F-type ATPases have 2 components, CF(1) - the catalytic core - and CF(0) - the membrane proton channel. CF(1) has five subunits: alpha(3), beta(3), gamma(1), delta(1), epsilon(1). CF(0) has three main subunits: a(1), b(2) and c(9-12). The alpha and beta chains form an alternating ring which encloses part of the gamma chain. CF(1) is attached to CF(0) by a central stalk formed by the gamma and epsilon chains, while a peripheral stalk is formed by the delta and b chains.

The protein localises to the cell inner membrane. In terms of biological role, key component of the proton channel; it plays a direct role in the translocation of protons across the membrane. The polypeptide is ATP synthase subunit a (Teredinibacter turnerae (strain ATCC 39867 / T7901)).